The primary structure comprises 156 residues: Small ribosomal subunit protein uS7 (156 aa).

This sequence belongs to the universal ribosomal protein uS7 family. In terms of assembly, part of the 30S ribosomal subunit. Contacts proteins S9 and S11.

In terms of biological role, one of the primary rRNA binding proteins, it binds directly to 16S rRNA where it nucleates assembly of the head domain of the 30S subunit. Is located at the subunit interface close to the decoding center, probably blocks exit of the E-site tRNA. This chain is Small ribosomal subunit protein uS7, found in Streptococcus thermophilus (strain CNRZ 1066).